Here is a 123-residue protein sequence, read N- to C-terminus: Large ribosomal subunit protein eL8 (123 aa).

This sequence belongs to the eukaryotic ribosomal protein eL8 family. May be present in up to 3 copies per 70S ribosome. Part of the 50S ribosomal subunit, where it binds 23S rRNA at its canonical site near the L1 stalk, as well as a possible second 50S binding site near helix 25 and a possible third site on the beak of the 30S subunit. Component of box C/D small ribonucleoprotein (sRNP) particles that contain rpl7ae, FlpA and nop5, plus a guide RNA. These sRNP particles form homodimers, giving rise to an asymmetric holoenzyme. Probably part of the RNase P complex.

It localises to the cytoplasm. Its function is as follows. Multifunctional RNA-binding protein that recognizes the K-turn motif in ribosomal RNA, the RNA component of RNase P, box H/ACA, box C/D and box C'/D' sRNAs. Component of the 70S ribosome. Component of a box C/D small ribonucleoprotein (sRNP) particle that is involved in pre-rRNA and tRNA processing. Utilizes the methyl donor S-adenosyl-L-methionine to catalyze the site-specific 2'-hydroxyl methylation of ribose moieties in rRNA and tRNA. Site specificity is provided by a guide RNA that base pairs with the substrate. Methylation occurs at a characteristic distance from the sequence involved in base pairing with the guide RNA. This chain is Large ribosomal subunit protein eL8, found in Pyrococcus furiosus (strain ATCC 43587 / DSM 3638 / JCM 8422 / Vc1).